We begin with the raw amino-acid sequence, 366 residues long: tRNA/tmRNA (uracil-C(5))-methyltransferase (366 aa).

Gln190, Tyr218, Asn223, Glu239, and Asp299 together coordinate S-adenosyl-L-methionine. The Nucleophile role is filled by Cys324. Glu358 acts as the Proton acceptor in catalysis.

The protein belongs to the class I-like SAM-binding methyltransferase superfamily. RNA M5U methyltransferase family. TrmA subfamily.

The catalysed reaction is uridine(54) in tRNA + S-adenosyl-L-methionine = 5-methyluridine(54) in tRNA + S-adenosyl-L-homocysteine + H(+). It carries out the reaction uridine(341) in tmRNA + S-adenosyl-L-methionine = 5-methyluridine(341) in tmRNA + S-adenosyl-L-homocysteine + H(+). Functionally, dual-specificity methyltransferase that catalyzes the formation of 5-methyluridine at position 54 (m5U54) in all tRNAs, and that of position 341 (m5U341) in tmRNA (transfer-mRNA). The sequence is that of tRNA/tmRNA (uracil-C(5))-methyltransferase from Escherichia fergusonii (strain ATCC 35469 / DSM 13698 / CCUG 18766 / IAM 14443 / JCM 21226 / LMG 7866 / NBRC 102419 / NCTC 12128 / CDC 0568-73).